The primary structure comprises 490 residues: MDEPSNMSTTSSKIPQYDFYSDVDNLHPDQFRIQCLPGRNFISPLVEQKKDFVKAHVIHDKDLDIMYDPMPKGKCNISQSCLTLPLACPRVSLHFDPSKTTVAMVTCGGVCPGLNDVIRGITLAAVCSYHVKKVIGFKYGYWGLSKAGRHTAIELTSNIVRGLRHLGGTFLGTSRGGQNISDMVDTLVEYGVNILFTIGGDGTQKGAVAISEEVNRRGLDIAVFGIPKTIDNDLSFSQRTFGYETAVSEAVIAIRAAHAEAISHEYGVGIVKLMGRNSGFIAASATVASALSHICLIPEKNVSKKVLLSLIEARFMMAKDIVIVVAEGFGQDWPDCNEDLGSDASGNKRLTDIGLVIKKIVQDHLSKNPKYHQSTVKYIDPSYMIRACPASTSDAAFCSNLSTLAVHEAMAGRTACLITLWYSNFVLVPIKTAVSHRKIVSTGGALWRQVREVTVDGSGDIAMVHQQELSRELKAINAHRNSIMEQLSKL.

ATP is bound by residues Gly-109, 175–176 (RG), and 200–203 (GDGT). Asp-201 provides a ligand contact to Mg(2+). Substrate is bound by residues 229–231 (TID), 274–276 (MGR), Glu-327, and 383–386 (YMIR). The Proton acceptor role is filled by Asp-231. Positions 488 to 490 (SKL) match the Peroxisomal targeting signal motif.

Belongs to the phosphofructokinase type A (PFKA) family. PPi-dependent PFK group II subfamily. Atypical ATP-dependent clade 'X' sub-subfamily. Homotetramer. Mg(2+) serves as cofactor.

Its subcellular location is the glycosome. The enzyme catalyses beta-D-fructose 6-phosphate + ATP = beta-D-fructose 1,6-bisphosphate + ADP + H(+). It functions in the pathway carbohydrate degradation; glycolysis; D-glyceraldehyde 3-phosphate and glycerone phosphate from D-glucose: step 3/4. With respect to regulation, allosterically activated by AMP. Its function is as follows. Catalyzes the phosphorylation of D-fructose 6-phosphate to fructose 1,6-bisphosphate by ATP, the first committing step of glycolysis. The polypeptide is ATP-dependent 6-phosphofructokinase (Trypanoplasma borreli).